A 402-amino-acid polypeptide reads, in one-letter code: Multidrug resistance protein MdtH (402 aa).

Over 1–12 the chain is Cytoplasmic; the sequence is MSRVSQARNLGK. The chain crosses the membrane as a helical span at residues 13–33; the sequence is YFLLIDNMLVVLGFFVVFPLI. The Periplasmic portion of the chain corresponds to 34–98; sequence SIRFVDQMGW…GFATMGIAHE (65 aa). A helical transmembrane segment spans residues 99 to 116; sequence PWLLWFSCLLSGLGGTLF. The Cytoplasmic segment spans residues 117–138; it reads DPPRSALVVKLIRPQQRGRFFS. A helical transmembrane segment spans residues 139–159; that stretch reads LLMMQDSAGAVIGALLGSWLL. Residues 160-164 are Periplasmic-facing; that stretch reads QYDFR. Residues 165-185 form a helical membrane-spanning segment; sequence LVCATGAVLFVLCAAFNAWLL. The Cytoplasmic segment spans residues 186 to 213; the sequence is PAWKLSTVRTPVREGMTRVMRDKRFVTY. The chain crosses the membrane as a helical span at residues 214–234; sequence VLTLAGYYMLAVQVMLMLPIM. Residues 235–243 are Periplasmic-facing; that stretch reads VNDVAGAPS. A helical membrane pass occupies residues 244–264; it reads AVKWMYAIEACLSLTLLYPIA. The Cytoplasmic portion of the chain corresponds to 265 to 276; sequence RWSEKHFRLEHR. A helical membrane pass occupies residues 277–297; sequence LMAGLLIMSLSMMPVGMVSGL. Residues 298–299 lie on the Periplasmic side of the membrane; sequence QQ. The helical transmembrane segment at 300–320 threads the bilayer; that stretch reads LFNLICLFYIGSIIAEPARET. Topologically, residues 321–339 are cytoplasmic; that stretch reads LSASLADARARGSYMGFSR. The helical transmembrane segment at 340–360 threads the bilayer; the sequence is LGLAIGGAIGYIGGGWLFDLG. The Periplasmic portion of the chain corresponds to 361 to 367; sequence KSAHQPE. A helical membrane pass occupies residues 368–388; sequence LPWMMLGIIGIFTFLALGWQF. At 389 to 402 the chain is on the cytoplasmic side; sequence SQKRAARRLLERDA.

Belongs to the major facilitator superfamily. DHA1 family. MdtH (TC 2.A.1.2.21) subfamily.

The protein resides in the cell inner membrane. Confers resistance to norfloxacin and enoxacin. This chain is Multidrug resistance protein MdtH, found in Escherichia coli O9:H4 (strain HS).